The chain runs to 347 residues: Protein RecA (347 aa).

Position 64-71 (64-71) interacts with ATP; the sequence is GPESSGKT.

It belongs to the RecA family.

It is found in the cytoplasm. In terms of biological role, can catalyze the hydrolysis of ATP in the presence of single-stranded DNA, the ATP-dependent uptake of single-stranded DNA by duplex DNA, and the ATP-dependent hybridization of homologous single-stranded DNAs. It interacts with LexA causing its activation and leading to its autocatalytic cleavage. This Bacillus velezensis (strain DSM 23117 / BGSC 10A6 / LMG 26770 / FZB42) (Bacillus amyloliquefaciens subsp. plantarum) protein is Protein RecA.